Here is a 602-residue protein sequence, read N- to C-terminus: Elongation factor 4 (602 aa).

The 183-residue stretch at 7–189 folds into the tr-type G domain; sequence KYIRNFSIVA…AIVNKVPAPD (183 aa). GTP contacts are provided by residues 19–24 and 136–139; these read DHGKST and NKID.

Belongs to the TRAFAC class translation factor GTPase superfamily. Classic translation factor GTPase family. LepA subfamily.

It localises to the cell membrane. It catalyses the reaction GTP + H2O = GDP + phosphate + H(+). Its function is as follows. Required for accurate and efficient protein synthesis under certain stress conditions. May act as a fidelity factor of the translation reaction, by catalyzing a one-codon backward translocation of tRNAs on improperly translocated ribosomes. Back-translocation proceeds from a post-translocation (POST) complex to a pre-translocation (PRE) complex, thus giving elongation factor G a second chance to translocate the tRNAs correctly. Binds to ribosomes in a GTP-dependent manner. The polypeptide is Elongation factor 4 (Clostridium botulinum (strain 657 / Type Ba4)).